Consider the following 411-residue polypeptide: Ubiquitin-binding protein CUE5 (411 aa).

Over residues 1-12 (MEEKEGIKDSSL) the composition is skewed to basic and acidic residues. Disordered stretches follow at residues 1 to 102 (MEEK…NPIL) and 142 to 411 (ESGK…DDEM). Residue lysine 15 forms a Glycyl lysine isopeptide (Lys-Gly) (interchain with G-Cter in ubiquitin) linkage. Serine 21 and serine 36 each carry phosphoserine. Residues 25–58 (DISKTTDVDLNSDGKKDNDTSAKDGTPKVEEKVN) are compositionally biased toward basic and acidic residues. A Glycyl lysine isopeptide (Lys-Gly) (interchain with G-Cter in ubiquitin) cross-link involves residue lysine 59. Position 70 is a phosphothreonine (threonine 70). Lysine 76 participates in a covalent cross-link: Glycyl lysine isopeptide (Lys-Gly) (interchain with G-Cter in ubiquitin). Serine 91 is subject to Phosphoserine. The CUE domain occupies 97–140 (KENPILQELKDAFPNLEEKYIKAVIIASQGVLSPAFNALLFLSD). Lysine 156 participates in a covalent cross-link: Glycyl lysine isopeptide (Lys-Gly) (interchain with G-Cter in ubiquitin). Phosphothreonine is present on threonine 167. Over residues 209 to 219 (NPNEREQHHED) the composition is skewed to basic and acidic residues. At serine 220 the chain carries Phosphoserine. Over residues 230 to 242 (VEKDLPELTDRAG) the composition is skewed to basic and acidic residues. Positions 245-256 (LQDTANKVSNWI) are enriched in polar residues. Residues serine 309 and serine 318 each carry the phosphoserine modification. Residue threonine 346 is modified to Phosphothreonine. Phosphoserine is present on serine 348. Threonine 352 carries the post-translational modification Phosphothreonine. A Glycyl lysine isopeptide (Lys-Gly) (interchain with G-Cter in ubiquitin) cross-link involves residue lysine 354. A phosphothreonine mark is found at threonine 364 and threonine 367. Positions 373 to 376 (WQPL) match the AIM motif. Residue lysine 396 forms a Glycyl lysine isopeptide (Lys-Gly) (interchain with G-Cter in ubiquitin) linkage. Positions 399 to 411 (DEDEFLINSDDEM) are enriched in acidic residues. Phosphoserine is present on serine 407.

In terms of assembly, interacts with ATG8 (via AIM motif), CLB2, and ubiquitin (via CUE domain).

The protein localises to the cytoplasm. Its function is as follows. Connects the ubiquitin pathway to autophagy by functioning as a ubiquitin-ATG8 adapter and thus mediating autophagic clearance of ubiquitin conjugates under starvation conditions. The CUE5-dependent selective autophagy pathway plays an important role in clearance of cytotoxic protein aggregates. Not required for cytoplasmic to vacuole pathway (cvt), mitophagy, pexophagy, or ribophagy. The chain is Ubiquitin-binding protein CUE5 from Saccharomyces cerevisiae (strain ATCC 204508 / S288c) (Baker's yeast).